The sequence spans 349 residues: Sensory histidine kinase/phosphatase NtrB (349 aa).

Residues 5–78 (TQPDAGQILN…SLEAGQGFTD (74 aa)) enclose the PAS domain. Residues 136–349 (GLAHEIKNPL…EFSVYLPIRK (214 aa)) enclose the Histidine kinase domain. Phosphohistidine; by autocatalysis is present on His139. Position 329 (Lys329) interacts with ATP.

Autophosphorylated.

It localises to the cytoplasm. It catalyses the reaction ATP + protein L-histidine = ADP + protein N-phospho-L-histidine.. Member of the two-component regulatory system NtrB/NtrC, which controls expression of the nitrogen-regulated (ntr) genes in response to nitrogen limitation. Under conditions of nitrogen limitation, NtrB autophosphorylates and transfers the phosphoryl group to NtrC. In the presence of nitrogen, acts as a phosphatase that dephosphorylates and inactivates NtrC. The chain is Sensory histidine kinase/phosphatase NtrB (glnL) from Escherichia coli O157:H7.